Consider the following 211-residue polypeptide: MHDPQDVMMNLVPIVVEQTSRGERSFDIYSRLLKERIIFITGPIEDHMASLIIAQLLFLESENPKKEISMYINSPGGVVSAGLGIYDTMQYIRSPVSTMCLGMAASMGSLLLTAGEKDMRFAAPNARIMVHQPSGGFRGQASDIERHAADIQKIKRRLNEIYVHHTGRTYDEIESALDRDNFMSAQEGLEFGLVDKVIERRAEDEKEGSDS.

The active-site Nucleophile is the S106. H131 is a catalytic residue.

It belongs to the peptidase S14 family. As to quaternary structure, fourteen ClpP subunits assemble into 2 heptameric rings which stack back to back to give a disk-like structure with a central cavity, resembling the structure of eukaryotic proteasomes.

It localises to the cytoplasm. The enzyme catalyses Hydrolysis of proteins to small peptides in the presence of ATP and magnesium. alpha-casein is the usual test substrate. In the absence of ATP, only oligopeptides shorter than five residues are hydrolyzed (such as succinyl-Leu-Tyr-|-NHMec, and Leu-Tyr-Leu-|-Tyr-Trp, in which cleavage of the -Tyr-|-Leu- and -Tyr-|-Trp bonds also occurs).. In terms of biological role, cleaves peptides in various proteins in a process that requires ATP hydrolysis. Has a chymotrypsin-like activity. Plays a major role in the degradation of misfolded proteins. The sequence is that of ATP-dependent Clp protease proteolytic subunit from Maricaulis maris (strain MCS10) (Caulobacter maris).